The following is a 113-amino-acid chain: uncharacterized protein (113 aa).

2 helical membrane-spanning segments follow: residues 25–45 and 49–69; these read FGFC…CFII and FEVE…LSVW.

Its subcellular location is the host membrane. This is an uncharacterized protein from Spiroplasma citri (SpV1).